The chain runs to 277 residues: Glutamate racemase (277 aa).

Substrate is bound by residues 16-17 (DS) and 48-49 (YG). The Proton donor/acceptor role is filled by Cys79. 80-81 (NT) is a binding site for substrate. Cys191 (proton donor/acceptor) is an active-site residue. Residue 192-193 (TH) coordinates substrate.

It belongs to the aspartate/glutamate racemases family.

The catalysed reaction is L-glutamate = D-glutamate. Its pathway is cell wall biogenesis; peptidoglycan biosynthesis. Its function is as follows. Provides the (R)-glutamate required for cell wall biosynthesis. The protein is Glutamate racemase of Symbiobacterium thermophilum (strain DSM 24528 / JCM 14929 / IAM 14863 / T).